A 482-amino-acid polypeptide reads, in one-letter code: BTB/POZ domain-containing protein 6-B (482 aa).

Residues 80–150 (ADVHFVVGPP…MYSDEIELEA (71 aa)) enclose the BTB domain.

As to quaternary structure, interacts with cul3. Interacts (via BTB domain) with zbtb16/plzf. In embryos, expressed in the cranial ganglia.

The protein localises to the cytoplasm. It is found in the nucleus. Adapter protein for the cul3 E3 ubiquitin-protein ligase complex. Promotes the export of zbtb16/plzf from the nucleus to the cytoplasm and targets zbtb16/plzf for ubiquitination and degradation. Up-regulates neurog1 expression and antagonizes zbtb16/plzf, to promote neurogenesis. The protein is BTB/POZ domain-containing protein 6-B (btbd6b) of Danio rerio (Zebrafish).